Consider the following 95-residue polypeptide: Glutamyl-tRNA(Gln) amidotransferase subunit C (95 aa).

Belongs to the GatC family. As to quaternary structure, heterotrimer of A, B and C subunits.

The enzyme catalyses L-glutamyl-tRNA(Gln) + L-glutamine + ATP + H2O = L-glutaminyl-tRNA(Gln) + L-glutamate + ADP + phosphate + H(+). It catalyses the reaction L-aspartyl-tRNA(Asn) + L-glutamine + ATP + H2O = L-asparaginyl-tRNA(Asn) + L-glutamate + ADP + phosphate + 2 H(+). Allows the formation of correctly charged Asn-tRNA(Asn) or Gln-tRNA(Gln) through the transamidation of misacylated Asp-tRNA(Asn) or Glu-tRNA(Gln) in organisms which lack either or both of asparaginyl-tRNA or glutaminyl-tRNA synthetases. The reaction takes place in the presence of glutamine and ATP through an activated phospho-Asp-tRNA(Asn) or phospho-Glu-tRNA(Gln). This chain is Glutamyl-tRNA(Gln) amidotransferase subunit C, found in Rhizobium meliloti (strain 1021) (Ensifer meliloti).